The following is a 266-amino-acid chain: Sec-independent protein translocase protein TatC (266 aa).

The next 6 helical transmembrane spans lie at 28–48 (MIIATIILMNNKNVIFDYILF), 93–113 (FNIYVWTCFIGGFILSFPYIF), 134–154 (GIIMMVTFLFILGVLFGYFIL), 183–203 (LIMHSILSMGITFLFPIFIYF), 221–241 (HAFLILLILASAITPGDIFST), and 242–262 (IVVLIPLMILYQFSIYISFYV).

It belongs to the TatC family. In terms of assembly, forms a complex with TatA.

It localises to the cell inner membrane. Its function is as follows. Part of the twin-arginine translocation (Tat) system that transports large folded proteins containing a characteristic twin-arginine motif in their signal peptide across membranes. The polypeptide is Sec-independent protein translocase protein TatC (Blattabacterium sp. subsp. Periplaneta americana (strain BPLAN) (Periplaneta americana symbiotic bacterium)).